A 348-amino-acid polypeptide reads, in one-letter code: Mannonate dehydratase (348 aa).

This sequence belongs to the mannonate dehydratase family. Fe(2+) is required as a cofactor. Mn(2+) serves as cofactor.

The enzyme catalyses D-mannonate = 2-dehydro-3-deoxy-D-gluconate + H2O. It functions in the pathway carbohydrate metabolism; pentose and glucuronate interconversion. In terms of biological role, catalyzes the dehydration of D-mannonate. This Streptococcus agalactiae serotype V (strain ATCC BAA-611 / 2603 V/R) protein is Mannonate dehydratase.